A 329-amino-acid chain; its full sequence is DNA-directed RNA polymerase subunit alpha (329 aa).

The alpha N-terminal domain (alpha-NTD) stretch occupies residues 1–235; the sequence is MQGFVEDFLK…QQLEAFVDLR (235 aa). The interval 249–329 is alpha C-terminal domain (alpha-CTD); that stretch reads FEPVLLRPVD…NWPPKSLLED (81 aa).

It belongs to the RNA polymerase alpha chain family. As to quaternary structure, homodimer. The RNAP catalytic core consists of 2 alpha, 1 beta, 1 beta' and 1 omega subunit. When a sigma factor is associated with the core the holoenzyme is formed, which can initiate transcription.

It carries out the reaction RNA(n) + a ribonucleoside 5'-triphosphate = RNA(n+1) + diphosphate. In terms of biological role, DNA-dependent RNA polymerase catalyzes the transcription of DNA into RNA using the four ribonucleoside triphosphates as substrates. The protein is DNA-directed RNA polymerase subunit alpha of Buchnera aphidicola subsp. Cinara cedri (strain Cc).